The primary structure comprises 314 residues: Tyrosine recombinase XerC (314 aa).

Residues 1–85 enclose the Core-binding (CB) domain; the sequence is MNEQVEAFLR…AVKSFFTFLT (85 aa). The 186-residue stretch at 106–291 folds into the Tyr recombinase domain; the sequence is DLPRALTPRQ…NHESSHTPHA (186 aa). Residues Arg-147, Lys-171, His-243, Arg-246, and His-269 contribute to the active site. Tyr-278 functions as the O-(3'-phospho-DNA)-tyrosine intermediate in the catalytic mechanism. The disordered stretch occupies residues 284-314; it reads ESSHTPHAHPAPRASEVNGVRDEQALVPEEK. Residues 302-314 are compositionally biased toward basic and acidic residues; the sequence is GVRDEQALVPEEK.

This sequence belongs to the 'phage' integrase family. XerC subfamily. Forms a cyclic heterotetrameric complex composed of two molecules of XerC and two molecules of XerD.

The protein resides in the cytoplasm. Functionally, site-specific tyrosine recombinase, which acts by catalyzing the cutting and rejoining of the recombining DNA molecules. The XerC-XerD complex is essential to convert dimers of the bacterial chromosome into monomers to permit their segregation at cell division. It also contributes to the segregational stability of plasmids. In Roseiflexus castenholzii (strain DSM 13941 / HLO8), this protein is Tyrosine recombinase XerC.